We begin with the raw amino-acid sequence, 235 residues long: Large ribosomal subunit protein bL25 (235 aa).

2 disordered regions span residues 1–21 (MADNIINAQRREEKGKGPARR) and 210–235 (APAAGAAPAAGGEAAKKAPEAKGAKK). Residues 210–222 (APAAGAAPAAGGE) are compositionally biased toward low complexity. Residues 223–235 (AAKKAPEAKGAKK) are compositionally biased toward basic and acidic residues.

The protein belongs to the bacterial ribosomal protein bL25 family. CTC subfamily. Part of the 50S ribosomal subunit; part of the 5S rRNA/L5/L18/L25 subcomplex. Contacts the 5S rRNA. Binds to the 5S rRNA independently of L5 and L18.

Its function is as follows. This is one of the proteins that binds to the 5S RNA in the ribosome where it forms part of the central protuberance. This is Large ribosomal subunit protein bL25 from Anaeromyxobacter sp. (strain Fw109-5).